The following is a 54-amino-acid chain: Putative ankyrin repeat protein RC0701 (54 aa).

Residues serine 17–serine 46 form an ANK repeat.

The protein is Putative ankyrin repeat protein RC0701 of Rickettsia conorii (strain ATCC VR-613 / Malish 7).